The chain runs to 344 residues: Ribosomal RNA large subunit methyltransferase Cfr (344 aa).

The active-site Proton acceptor is the Glu-90. The 234-residue stretch at Lys-97 to Glu-330 folds into the Radical SAM core domain. Cys-104 and Cys-335 are joined by a disulfide. Residues Cys-111, Cys-115, and Cys-118 each contribute to the [4Fe-4S] cluster site. Residues Gly-157 to Glu-158, Ser-188, Ser-211 to His-213, and Asn-292 contribute to the S-adenosyl-L-methionine site. The S-methylcysteine intermediate role is filled by Cys-335.

Belongs to the radical SAM superfamily. RlmN family. Cfr subfamily. It depends on [4Fe-4S] cluster as a cofactor.

It localises to the cytoplasm. It carries out the reaction adenosine(2503) in 23S rRNA + 2 reduced [2Fe-2S]-[ferredoxin] + 2 S-adenosyl-L-methionine = 8-methyladenosine(2503) in 23S rRNA + 5'-deoxyadenosine + L-methionine + 2 oxidized [2Fe-2S]-[ferredoxin] + S-adenosyl-L-homocysteine. Its function is as follows. Specifically methylates position 8 of adenine 2503 in 23S rRNA. Confers resistance to some classes of antibiotics. The sequence is that of Ribosomal RNA large subunit methyltransferase Cfr from Clostridium botulinum (strain Loch Maree / Type A3).